A 41-amino-acid chain; its full sequence is Large ribosomal subunit protein bL36 (41 aa).

The protein belongs to the bacterial ribosomal protein bL36 family.

The polypeptide is Large ribosomal subunit protein bL36 (Bartonella quintana (strain Toulouse) (Rochalimaea quintana)).